An 83-amino-acid chain; its full sequence is RNA-binding protein Hfq (83 aa).

The Sm domain maps to 10–69; it reads DPFLNALRREHVPVSIYLVNGIKLQGQIESFDQYVVLLRNTVTQMVYKHAISTIVPGRAV.

Belongs to the Hfq family. As to quaternary structure, homohexamer.

RNA chaperone that binds small regulatory RNA (sRNAs) and mRNAs to facilitate mRNA translational regulation in response to envelope stress, environmental stress and changes in metabolite concentrations. Also binds with high specificity to tRNAs. In Delftia acidovorans (strain DSM 14801 / SPH-1), this protein is RNA-binding protein Hfq.